We begin with the raw amino-acid sequence, 147 residues long: MSQGQGGITLDDLIAQADYLKRYIDSLQRTQLELLESINSIDSAKQAIETIKSGNKEMLVFIDRKGYLLAKVGGIVGDKVTVHLGLSYYAEVDLDSAIKILDKRKDEISKAAQNLNNELQKAASTYNQIVDILNQIQQAAARRQQGE.

This sequence belongs to the prefoldin alpha subunit family. Heterohexamer of two alpha and four beta subunits.

The protein localises to the cytoplasm. Its function is as follows. Molecular chaperone capable of stabilizing a range of proteins. Seems to fulfill an ATP-independent, HSP70-like function in archaeal de novo protein folding. In Saccharolobus islandicus (strain L.S.2.15 / Lassen #1) (Sulfolobus islandicus), this protein is Prefoldin subunit alpha.